A 311-amino-acid chain; its full sequence is Methionyl-tRNA formyltransferase (311 aa).

112 to 115 contributes to the (6S)-5,6,7,8-tetrahydrofolate binding site; that stretch reads SLLP.

This sequence belongs to the Fmt family.

It catalyses the reaction L-methionyl-tRNA(fMet) + (6R)-10-formyltetrahydrofolate = N-formyl-L-methionyl-tRNA(fMet) + (6S)-5,6,7,8-tetrahydrofolate + H(+). In terms of biological role, attaches a formyl group to the free amino group of methionyl-tRNA(fMet). The formyl group appears to play a dual role in the initiator identity of N-formylmethionyl-tRNA by promoting its recognition by IF2 and preventing the misappropriation of this tRNA by the elongation apparatus. The sequence is that of Methionyl-tRNA formyltransferase from Bradyrhizobium sp. (strain BTAi1 / ATCC BAA-1182).